A 164-amino-acid chain; its full sequence is Putative 4-hydroxy-4-methyl-2-oxoglutarate aldolase (164 aa).

Substrate contacts are provided by residues 80–83 (GGNL) and arginine 102. Aspartate 103 is a binding site for a divalent metal cation.

This sequence belongs to the class II aldolase/RraA-like family. Homotrimer. A divalent metal cation is required as a cofactor.

It carries out the reaction 4-hydroxy-4-methyl-2-oxoglutarate = 2 pyruvate. The enzyme catalyses oxaloacetate + H(+) = pyruvate + CO2. Functionally, catalyzes the aldol cleavage of 4-hydroxy-4-methyl-2-oxoglutarate (HMG) into 2 molecules of pyruvate. Also contains a secondary oxaloacetate (OAA) decarboxylase activity due to the common pyruvate enolate transition state formed following C-C bond cleavage in the retro-aldol and decarboxylation reactions. The sequence is that of Putative 4-hydroxy-4-methyl-2-oxoglutarate aldolase from Paraburkholderia phytofirmans (strain DSM 17436 / LMG 22146 / PsJN) (Burkholderia phytofirmans).